The following is a 138-amino-acid chain: Acidic phospholipase A2 6 (138 aa).

Positions 1–16 (MRTLWIMAVLLVGVEG) are cleaved as a signal peptide. 7 cysteine pairs are disulfide-bonded: Cys42–Cys131, Cys44–Cys60, Cys59–Cys111, Cys65–Cys138, Cys66–Cys104, Cys73–Cys97, and Cys91–Cys102. Residues Tyr43, Gly45, and Gly47 each contribute to the Ca(2+) site. His63 is a catalytic residue. A Ca(2+)-binding site is contributed by Asp64. Asp105 is a catalytic residue.

It belongs to the phospholipase A2 family. Group II subfamily. D49 sub-subfamily. Homodimer. Ca(2+) is required as a cofactor. As to expression, expressed by the venom gland.

It localises to the secreted. It catalyses the reaction a 1,2-diacyl-sn-glycero-3-phosphocholine + H2O = a 1-acyl-sn-glycero-3-phosphocholine + a fatty acid + H(+). Snake venom phospholipase A2 (PLA2) that has high lipolytic activity. PLA2 catalyzes the calcium-dependent hydrolysis of the 2-acyl groups in 3-sn-phosphoglycerides. This is Acidic phospholipase A2 6 from Craspedocephalus gramineus (Bamboo pit viper).